The chain runs to 129 residues: UPF0148 protein APE_0207 (129 aa).

This sequence belongs to the UPF0148 family.

This chain is UPF0148 protein APE_0207, found in Aeropyrum pernix (strain ATCC 700893 / DSM 11879 / JCM 9820 / NBRC 100138 / K1).